A 554-amino-acid chain; its full sequence is MVCIQCEQTVQTPTAKGCSYTQGMCGKTADVSDLQDVLVFNLQGVSFWAELGRKYNIIDAEIDAWAPRAFFSTLTNVNFVPERITEYTEIAERYKIQLSTQVMAAAAAAGEALPELSPAAQFVLPATAEEIMNFAPEAAVNRGHEELHEDIIGLRLLCLYGLKGAAAYMEHANVLGQSEESICAEYHQIMAFLGTDPTDANALLETSMQIGLLNYRIMEILDRGETNTFGHPQPTQVNVKPVAGKCILVSGHDLHDLEKILQQTEGKGINVYTNGEMLPAHGYPELNKYPHLVGNFGSAWQNQQKEFANFPGAIVMTSNCLINPNVGQYADRLFTRSIVGWPGVVHIEGDDFSQVIECALAQEGIAHTEIEHMITVGFGRNALMAAAPAVINEVKAGNIKHFFLIGGCDGDKEERSYFTDIAVSAPEDSVILTLACGKYRFNKKEFGDINGIPRLLDVGQCNDTYSAIQLVLALAEEFDCGVNELPLSIVLSWFEQKAIVVLLTLFALGIKGIYTGPTAPAFLTDNLIKALQENFDMRSVGDVETDLATMLAGK.

Positions 3, 6, 18, and 25 each coordinate [2Fe-2S] cluster. Hybrid [4Fe-2O-2S] cluster-binding residues include histidine 252, glutamate 276, cysteine 320, cysteine 408, cysteine 436, cysteine 461, glutamate 495, and lysine 497. Cysteine 408 is subject to Cysteine persulfide.

It belongs to the HCP family. [2Fe-2S] cluster is required as a cofactor. It depends on hybrid [4Fe-2O-2S] cluster as a cofactor.

The protein resides in the cytoplasm. It catalyses the reaction A + NH4(+) + H2O = hydroxylamine + AH2 + H(+). Catalyzes the reduction of hydroxylamine to form NH(3) and H(2)O. In Photobacterium profundum (strain SS9), this protein is Hydroxylamine reductase.